A 314-amino-acid polypeptide reads, in one-letter code: WD repeat domain-containing protein 83 (314 aa).

WD repeat units follow at residues 23 to 62 (CNQG…LLKT), 65 to 104 (GHGY…VVRK), 107 to 146 (GHAG…PEAI), 151 to 188 (EAKD…MCAD), 189 to 228 (YLGS…LLGE), 231 to 272 (GHQN…LVLK), and 275 to 313 (VGKA…EEGG).

This sequence belongs to the WD repeat MORG1 family.

It is found in the cytoplasm. In terms of biological role, molecular scaffold protein for various multimeric protein complexes. Acts as a module in the assembly of a multicomponent scaffold for the ERK pathway, linking ERK responses to specific agonists. Also involved in response to hypoxia by acting as a negative regulator of HIF1A/HIF-1-alpha. This Xenopus tropicalis (Western clawed frog) protein is WD repeat domain-containing protein 83 (wdr83).